A 270-amino-acid polypeptide reads, in one-letter code: Tryptophan synthase alpha chain (270 aa).

Active-site proton acceptor residues include glutamate 49 and aspartate 60.

The protein belongs to the TrpA family. Tetramer of two alpha and two beta chains.

It catalyses the reaction (1S,2R)-1-C-(indol-3-yl)glycerol 3-phosphate + L-serine = D-glyceraldehyde 3-phosphate + L-tryptophan + H2O. It participates in amino-acid biosynthesis; L-tryptophan biosynthesis; L-tryptophan from chorismate: step 5/5. In terms of biological role, the alpha subunit is responsible for the aldol cleavage of indoleglycerol phosphate to indole and glyceraldehyde 3-phosphate. This chain is Tryptophan synthase alpha chain, found in Pseudomonas fluorescens (strain Pf0-1).